A 108-amino-acid chain; its full sequence is MIDIEVLHRVAATLAERKKADPDSSYVSSLYAKGTDAICKKVAEEAAETIMAAKDKDMLHVVWEVTDLWFHSLVLLTHFGLSVDDVLAEFRRREGVSGIDEKKSRTVS.

The protein belongs to the PRA-PH family.

The protein resides in the cytoplasm. The enzyme catalyses 1-(5-phospho-beta-D-ribosyl)-ATP + H2O = 1-(5-phospho-beta-D-ribosyl)-5'-AMP + diphosphate + H(+). The protein operates within amino-acid biosynthesis; L-histidine biosynthesis; L-histidine from 5-phospho-alpha-D-ribose 1-diphosphate: step 2/9. The chain is Phosphoribosyl-ATP pyrophosphatase from Aromatoleum aromaticum (strain DSM 19018 / LMG 30748 / EbN1) (Azoarcus sp. (strain EbN1)).